The chain runs to 234 residues: Triosephosphate isomerase (234 aa).

8-10 is a substrate binding site; sequence NFK. His90 functions as the Electrophile in the catalytic mechanism. Glu159 (proton acceptor) is an active-site residue. Substrate contacts are provided by Gly165 and Ser197.

The protein belongs to the triosephosphate isomerase family. In terms of assembly, homodimer.

Its subcellular location is the cytoplasm. The catalysed reaction is D-glyceraldehyde 3-phosphate = dihydroxyacetone phosphate. It functions in the pathway carbohydrate biosynthesis; gluconeogenesis. Its pathway is carbohydrate degradation; glycolysis; D-glyceraldehyde 3-phosphate from glycerone phosphate: step 1/1. Involved in the gluconeogenesis. Catalyzes stereospecifically the conversion of dihydroxyacetone phosphate (DHAP) to D-glyceraldehyde-3-phosphate (G3P). This chain is Triosephosphate isomerase, found in Helicobacter pylori (strain G27).